The following is a 484-amino-acid chain: Cobyric acid synthase (484 aa).

A GATase cobBQ-type domain is found at 253-430; sequence SLRVAVVRFP…WHGAFEHDEF (178 aa). Cys-334 functions as the Nucleophile in the catalytic mechanism. The active site involves His-422.

The protein belongs to the CobB/CobQ family. CobQ subfamily.

Its pathway is cofactor biosynthesis; adenosylcobalamin biosynthesis. Its function is as follows. Catalyzes amidations at positions B, D, E, and G on adenosylcobyrinic A,C-diamide. NH(2) groups are provided by glutamine, and one molecule of ATP is hydrogenolyzed for each amidation. This is Cobyric acid synthase from Cutibacterium acnes (strain DSM 16379 / KPA171202) (Propionibacterium acnes).